The chain runs to 500 residues: Sulfate adenylyltransferase (500 aa).

The N-terminal stretch occupies residues 1–165 (MLSPHGGILQ…LEAIQLPAHY (165 aa)). The interval 166–390 (DYLNLRKSPA…LRQYNPPRYR (225 aa)) is catalytic. Gln-193 contacts sulfate. Residues 193–196 (QTRN) and 287–290 (GRDH) each bind ATP. Active-site residues include Thr-194, Arg-195, and Asn-196. Position 195 (Arg-195) interacts with sulfate. Ala-291 provides a ligand contact to sulfate. Ile-329 contacts ATP. The interval 391-500 (QGFVIVVNHE…FLEDNKFFQF (110 aa)) is required for oligomerization; adenylyl-sulfate kinase-like.

It belongs to the sulfate adenylyltransferase family. In terms of assembly, homohexamer. Dimer of trimers.

The protein resides in the cytoplasm. It catalyses the reaction sulfate + ATP + H(+) = adenosine 5'-phosphosulfate + diphosphate. Its pathway is sulfur metabolism; hydrogen sulfide biosynthesis; sulfite from sulfate: step 1/3. Functionally, catalyzes the first intracellular reaction of sulfate assimilation, forming adenosine-5'-phosphosulfate (APS) from inorganic sulfate and ATP. Plays an important role in sulfate activation as a component of the biosynthesis pathway of sulfur-containing amino acids. This Eremothecium gossypii (strain ATCC 10895 / CBS 109.51 / FGSC 9923 / NRRL Y-1056) (Yeast) protein is Sulfate adenylyltransferase.